A 123-amino-acid polypeptide reads, in one-letter code: Defensin beta 118 (123 aa).

A signal peptide spans 1 to 19 (MKLLLLALPMLVLLPQVIP). 3 disulfide bridges follow: Cys-27/Cys-54, Cys-34/Cys-48, and Cys-38/Cys-55. The propeptide occupies 65–123 (VPTTSPTPLSDSTPGIIDDILTVRFTTDYFEVSSKKDMIEESEAGRGTETSLPNVHHSS). Residues 100–110 (KDMIEESEAGR) show a composition bias toward basic and acidic residues. The segment at 100 to 123 (KDMIEESEAGRGTETSLPNVHHSS) is disordered. Residues 112–123 (TETSLPNVHHSS) are compositionally biased toward polar residues.

It belongs to the beta-defensin family. In terms of processing, the three-dimensional structure formed by the three intramolecular disulfide bridges is indispensable for antimicrobial activity.

It is found in the secreted. In terms of biological role, host defense peptide that exhibits antimicrobial activity against both Gram-negative bacteria, such as E.coli and S.typhimurium, and Gram-positive bacteria, such as S.aureus and B.subtilis. Inhibits cell adhesion of E.coli on intestinal epithelial enterocytes. Causes rapid permeabilization of both the outer and inner membrane of E.coli, leading to morphological alterations on the bacterial surface. Binds to bacterial lipopolysaccharides (LPS) with high affinity, and may thereby be involved in immunoregulation through LPS neutralization. May contribute to epididymal innate immunity and protect the sperm against attack by microorganisms. The sequence is that of Defensin beta 118 (DEFB118) from Gorilla gorilla gorilla (Western lowland gorilla).